Here is a 483-residue protein sequence, read N- to C-terminus: Peroxisomal biogenesis factor 3 (483 aa).

The Peroxisomal portion of the chain corresponds to 1–14 (MTGNRSLVQRHRKK). A helical transmembrane segment spans residues 15-35 (FVVSSVLFATLFATCAITVYF). Residues 36-483 (SKRWLYKQHL…SACVYSNFGL (448 aa)) lie on the Cytoplasmic side of the membrane. Disordered stretches follow at residues 119–149 (GLSS…VSET) and 230–253 (NNLP…TRSI). Polar residues predominate over residues 242 to 253 (SDGTIDTDTRSI).

The protein belongs to the peroxin-3 family.

The protein resides in the peroxisome membrane. In terms of biological role, involved in peroxisome biosynthesis. The polypeptide is Peroxisomal biogenesis factor 3 (PEX3) (Kluyveromyces lactis (strain ATCC 8585 / CBS 2359 / DSM 70799 / NBRC 1267 / NRRL Y-1140 / WM37) (Yeast)).